The primary structure comprises 259 residues: Aspartate/glutamate leucyltransferase (259 aa).

This sequence belongs to the R-transferase family. Bpt subfamily.

Its subcellular location is the cytoplasm. The catalysed reaction is N-terminal L-glutamyl-[protein] + L-leucyl-tRNA(Leu) = N-terminal L-leucyl-L-glutamyl-[protein] + tRNA(Leu) + H(+). It catalyses the reaction N-terminal L-aspartyl-[protein] + L-leucyl-tRNA(Leu) = N-terminal L-leucyl-L-aspartyl-[protein] + tRNA(Leu) + H(+). In terms of biological role, functions in the N-end rule pathway of protein degradation where it conjugates Leu from its aminoacyl-tRNA to the N-termini of proteins containing an N-terminal aspartate or glutamate. The protein is Aspartate/glutamate leucyltransferase of Rhizobium meliloti (strain 1021) (Ensifer meliloti).